We begin with the raw amino-acid sequence, 185 residues long: Ribosome-recycling factor (185 aa).

The protein belongs to the RRF family.

Its subcellular location is the cytoplasm. In terms of biological role, responsible for the release of ribosomes from messenger RNA at the termination of protein biosynthesis. May increase the efficiency of translation by recycling ribosomes from one round of translation to another. The protein is Ribosome-recycling factor of Campylobacter jejuni (strain RM1221).